The primary structure comprises 126 residues: Large ribosomal subunit protein bL20 (126 aa).

Residues 1–15 (MARVKRAVNAQKKRR) show a composition bias toward basic residues. The disordered stretch occupies residues 1–20 (MARVKRAVNAQKKRRTTLER).

It belongs to the bacterial ribosomal protein bL20 family.

In terms of biological role, binds directly to 23S ribosomal RNA and is necessary for the in vitro assembly process of the 50S ribosomal subunit. It is not involved in the protein synthesizing functions of that subunit. This Beutenbergia cavernae (strain ATCC BAA-8 / DSM 12333 / CCUG 43141 / JCM 11478 / NBRC 16432 / NCIMB 13614 / HKI 0122) protein is Large ribosomal subunit protein bL20.